Reading from the N-terminus, the 204-residue chain is Ubiquitin-conjugating enzyme E2 S (204 aa).

In terms of domain architecture, UBC core spans 14 to 160; sequence QIIKQVAREI…AKMFTEIHAK (147 aa). Cysteine 98 serves as the catalytic Glycyl thioester intermediate. The segment covering 165 to 176 has biased composition (polar residues); that stretch reads SSNNISEGQQES. Residues 165 to 204 form a disordered region; it reads SSNNISEGQQESLPGKKRVAVNEKMCDKKKKDKKRALKRL. Residues 191-204 are compositionally biased toward basic residues; that stretch reads DKKKKDKKRALKRL.

It belongs to the ubiquitin-conjugating enzyme family.

It catalyses the reaction S-ubiquitinyl-[E1 ubiquitin-activating enzyme]-L-cysteine + [E2 ubiquitin-conjugating enzyme]-L-cysteine = [E1 ubiquitin-activating enzyme]-L-cysteine + S-ubiquitinyl-[E2 ubiquitin-conjugating enzyme]-L-cysteine.. It functions in the pathway protein modification; protein ubiquitination. Catalyzes the covalent attachment of ubiquitin to other proteins. Acts as an essential factor of the anaphase promoting complex/cyclosome (APC/C), a cell cycle-regulated ubiquitin ligase that controls progression through mitosis. Acts by specifically elongating polyubiquitin chains initiated by the E2 enzyme UBCH10 on APC/C substrates, enhancing the degradation of APC/C substrates by the proteasome and promoting mitotic exit. The polypeptide is Ubiquitin-conjugating enzyme E2 S (Nematostella vectensis (Starlet sea anemone)).